A 963-amino-acid chain; its full sequence is Thrombospondin-4 (963 aa).

Positions 1–26 (MPAPRAAAAAFLLLHLVLQPWQRTSA) are cleaved as a signal peptide. Positions 29 to 194 (TPQVFDLLPS…LEELKLVVRG (166 aa)) constitute a Laminin G-like domain. The short motif at 138 to 140 (RGD) is the Cell attachment site element. The region spanning 288–327 (PTRHCDSSPCFRGVRCTDTRDGFQCGPCPDGYTGNGITCS) is the EGF-like 1 domain. Intrachain disulfides connect Cys-292–Cys-303, Cys-297–Cys-312, Cys-315–Cys-326, Cys-332–Cys-343, Cys-337–Cys-352, Cys-355–Cys-379, Cys-385–Cys-396, Cys-390–Cys-405, Cys-408–Cys-420, Cys-426–Cys-440, Cys-434–Cys-450, Cys-452–Cys-463, Cys-479–Cys-484, Cys-489–Cys-509, Cys-525–Cys-545, Cys-548–Cys-568, Cys-584–Cys-604, Cys-607–Cys-627, Cys-645–Cys-665, Cys-685–Cys-705, and Cys-721–Cys-942. The EGF-like 2; calcium-binding domain maps to 328–365 (DVDECKYHPCYPGVRCVNLAPGFRCDACPVGFTGPMVQ). The EGF-like 3; calcium-binding domain occupies 381–418 (DVDECQNGACVLNSICINTLGSYRCGPCKPGYTGDQTR). Positions 422–464 (TERSCRNPEQNPCSVHAQCIEERQGDVTCVCGVGWAGDGYVCG) constitute an EGF-like 4 domain. 8 TSP type-3 repeats span residues 465 to 497 (KDVD…NSGQ), 498 to 533 (EDAD…NIDQ), 534 to 556 (RNSD…NNDQ), 557 to 592 (KDTD…NRDQ), 593 to 615 (QDRD…NPNQ), 616 to 653 (SDVD…NSSQ), 654 to 693 (LDTD…NPAQ), and 694 to 729 (EDSN…EITL). The short motif at 564-566 (RGD) is the Cell attachment site element. Residues 579 to 676 (NILDNCPRVP…DDDDNDGIPD (98 aa)) are disordered. Residues Asn-614 and Asn-650 are each glycosylated (N-linked (GlcNAc...) asparagine). The segment covering 642–654 (TDNCPTVINSSQL) has biased composition (polar residues). The segment covering 662-673 (GDECDDDDDNDG) has biased composition (acidic residues). Positions 733-947 (RAYQTVVLDP…LKYRCNDTIP (215 aa)) constitute a TSP C-terminal domain. The N-linked (GlcNAc...) asparagine glycan is linked to Asn-943.

This sequence belongs to the thrombospondin family. Homopentamer; disulfide-linked. Interacts with PTBP3. Interacts (via EGF-like 3; calcium-binding domain) with ATF6 and facilitates its processing, activation and nuclear translocation. Interacts with NOTCH1. Heart. Up-regulated in the heart in response to ischemic injury and pathology (at protein level). Astrocytes; expressed at high levels in subventricular zone (SVZ)-derived astrocytes and at low levels in cortical astrocytes. In response to peripheral nerve injury, significantly up-regulated in the dorsal spinal cord (at protein level).

It localises to the endoplasmic reticulum. The protein resides in the sarcoplasmic reticulum. It is found in the secreted. Its subcellular location is the extracellular space. The protein localises to the extracellular matrix. In terms of biological role, adhesive glycoprotein that mediates cell-to-cell and cell-to-matrix interactions and is involved in various processes including cellular proliferation, migration, adhesion and attachment, inflammatory response to CNS injury, regulation of vascular inflammation and adaptive responses of the heart to pressure overload and in myocardial function and remodeling. Binds to structural extracellular matrix (ECM) proteins and modulates the ECM in response to tissue damage, contributing to cardioprotective and adaptive ECM remodeling. Plays a role in ER stress response, via its interaction with the activating transcription factor 6 alpha (ATF6) which produces adaptive ER stress response factors and protects myocardium from pressure overload. May contribute to spinal presynaptic hypersensitivity and neuropathic pain states after peripheral nerve injury. May play a role in regulating protective astrogenesis from the subventricular zone (SVZ) niche after injury in a NOTCH1-dependent manner. This Mus musculus (Mouse) protein is Thrombospondin-4 (Thbs4).